The following is a 400-amino-acid chain: CinA-like protein (400 aa).

The protein belongs to the CinA family.

The polypeptide is CinA-like protein (Sulfurihydrogenibium sp. (strain YO3AOP1)).